We begin with the raw amino-acid sequence, 277 residues long: Phosphate import ATP-binding protein PstB (277 aa).

The region spanning 31–272 (IEVPGLSLFY…PAKKQTEDYI (242 aa)) is the ABC transporter domain. 63-70 (GPSGCGKS) provides a ligand contact to ATP.

Belongs to the ABC transporter superfamily. Phosphate importer (TC 3.A.1.7) family. The complex is composed of two ATP-binding proteins (PstB), two transmembrane proteins (PstC and PstA) and a solute-binding protein (PstS).

It is found in the cell inner membrane. It catalyses the reaction phosphate(out) + ATP + H2O = ADP + 2 phosphate(in) + H(+). Part of the ABC transporter complex PstSACB involved in phosphate import. Responsible for energy coupling to the transport system. The chain is Phosphate import ATP-binding protein PstB from Pseudomonas putida (Arthrobacter siderocapsulatus).